Consider the following 393-residue polypeptide: Putative F-box/kelch-repeat protein At1g32430 (393 aa).

The 47-residue stretch at 1 to 47 folds into the F-box domain; that stretch reads MANKEKLPWDLEEEILSRVPPTSLDRFKTVCKRWNALFNDKTFINNH. 2 Kelch repeats span residues 151 to 199 and 308 to 357; these read YMKD…NLSV and WIYV…QVQF.

This is Putative F-box/kelch-repeat protein At1g32430 from Arabidopsis thaliana (Mouse-ear cress).